A 311-amino-acid polypeptide reads, in one-letter code: MLTTEKLVKLLKLELFTGEKGLHKPIKNTDISRPGLEMAGYFSHYAADRIQLLGTTELSFYNLLPDEERHGRMRKLCRPETPAIIVTRGLEPPQELIDAAQEMDTPLIVSKDATTSLMSRLTTFLEHELAKTTSLHGVLVDVYGVGVLITGDSGIGKSETALELVKRGHRLVADDNVEIREITKDELIGTPPKLIEHLLEIRGLGIINVMTLFGAGSILTQKQIRLNINLENWDKDKLYDRVGLNEETLQILDTEITKKTIPVRPGRNVAVIIEVAAMNYRLNIMGINTAEEFNQRLNEEILKKGHQSKEN.

Residues His-136 and Lys-157 contribute to the active site. Gly-151–Ser-158 contributes to the ATP binding site. Ser-158 is a Mg(2+) binding site. Asp-175 acts as the Proton acceptor; for phosphorylation activity. Proton donor; for dephosphorylation activity in catalysis. The tract at residues Leu-199–Asn-208 is important for the catalytic mechanism of both phosphorylation and dephosphorylation. A Mg(2+)-binding site is contributed by Glu-200. Arg-241 is a catalytic residue. The tract at residues Pro-262–Arg-267 is important for the catalytic mechanism of dephosphorylation.

It belongs to the HPrK/P family. As to quaternary structure, homohexamer. Mg(2+) is required as a cofactor.

It carries out the reaction [HPr protein]-L-serine + ATP = [HPr protein]-O-phospho-L-serine + ADP + H(+). The enzyme catalyses [HPr protein]-O-phospho-L-serine + phosphate + H(+) = [HPr protein]-L-serine + diphosphate. Catalyzes the ATP- as well as the pyrophosphate-dependent phosphorylation of a specific serine residue in HPr, a phosphocarrier protein of the phosphoenolpyruvate-dependent sugar phosphotransferase system (PTS). HprK/P also catalyzes the pyrophosphate-producing, inorganic phosphate-dependent dephosphorylation (phosphorolysis) of seryl-phosphorylated HPr (P-Ser-HPr). The two antagonistic activities of HprK/P are regulated by several intracellular metabolites, which change their concentration in response to the absence or presence of rapidly metabolisable carbon sources (glucose, fructose, etc.) in the growth medium. Therefore, by controlling the phosphorylation state of HPr, HPrK/P is a sensor enzyme that plays a major role in the regulation of carbon metabolism and sugar transport: it mediates carbon catabolite repression (CCR), and regulates PTS-catalyzed carbohydrate uptake and inducer exclusion. The polypeptide is HPr kinase/phosphorylase (Staphylococcus haemolyticus (strain JCSC1435)).